A 339-amino-acid chain; its full sequence is DNA-directed RNA polymerase subunit alpha (339 aa).

The alpha N-terminal domain (alpha-NTD) stretch occupies residues 1-233 (MVREKVRIST…DLFIPFLHAE (233 aa)). An alpha C-terminal domain (alpha-CTD) region spans residues 267–339 (IALKSIFIDQ…FTINLPKNKF (73 aa)).

It belongs to the RNA polymerase alpha chain family. In terms of assembly, in plastids the minimal PEP RNA polymerase catalytic core is composed of four subunits: alpha, beta, beta', and beta''. When a (nuclear-encoded) sigma factor is associated with the core the holoenzyme is formed, which can initiate transcription.

Its subcellular location is the plastid. The protein resides in the chloroplast. It catalyses the reaction RNA(n) + a ribonucleoside 5'-triphosphate = RNA(n+1) + diphosphate. DNA-dependent RNA polymerase catalyzes the transcription of DNA into RNA using the four ribonucleoside triphosphates as substrates. The sequence is that of DNA-directed RNA polymerase subunit alpha from Populus alba (White poplar).